The sequence spans 67 residues: Beta-defensin 123 (67 aa).

The signal sequence occupies residues 1 to 20 (MKLLLLTLTVLLLLSQLTPG). 3 cysteine pairs are disulfide-bonded: Cys25/Cys52, Cys32/Cys46, and Cys36/Cys53.

Belongs to the beta-defensin family.

It is found in the secreted. Its function is as follows. Has antibacterial activity. This chain is Beta-defensin 123 (DEFB123), found in Gorilla gorilla gorilla (Western lowland gorilla).